Reading from the N-terminus, the 330-residue chain is Beta-ketoacyl-[acyl-carrier-protein] synthase III (330 aa).

Catalysis depends on residues Cys-111 and His-249. Residues 250–254 (QANTR) form an ACP-binding region. The active site involves Asn-279.

This sequence belongs to the thiolase-like superfamily. FabH family. Homodimer.

The protein resides in the cytoplasm. It catalyses the reaction malonyl-[ACP] + acetyl-CoA + H(+) = 3-oxobutanoyl-[ACP] + CO2 + CoA. It functions in the pathway lipid metabolism; fatty acid biosynthesis. Functionally, catalyzes the condensation reaction of fatty acid synthesis by the addition to an acyl acceptor of two carbons from malonyl-ACP. Catalyzes the first condensation reaction which initiates fatty acid synthesis and may therefore play a role in governing the total rate of fatty acid production. Possesses both acetoacetyl-ACP synthase and acetyl transacylase activities. Its substrate specificity determines the biosynthesis of branched-chain and/or straight-chain of fatty acids. In Pseudomonas aeruginosa (strain LESB58), this protein is Beta-ketoacyl-[acyl-carrier-protein] synthase III.